Consider the following 646-residue polypeptide: Aquaglycerol porin AQY3 (646 aa).

Low complexity predominate over residues 1-14; it reads MSYESGRSSSSSES. Disordered regions lie at residues 1–68 and 175–262; these read MSYE…SRNK and KNMD…KKRT. Residues 1-350 lie on the Cytoplasmic side of the membrane; it reads MSYESGRSSS…AKIRYHMREP (350 aa). Residues 19–41 are compositionally biased toward basic and acidic residues; it reads TLKEEPNGKIAWEESVKKSRENN. Over residues 190-201 the composition is skewed to polar residues; the sequence is TDISRGGSTTSV. A helical transmembrane segment spans residues 351 to 371; that stretch reads FAEFLGTLVLVIFGVGGNLQA. At 372–383 the chain is on the extracellular side; that stretch reads TVTKGSGGSYES. Residues 384–404 form a helical membrane-spanning segment; the sequence is LSFAWGFGCMLGVYVAGGISG. The Cytoplasmic segment spans residues 405 to 427; the sequence is GHINPAVTISMAIFRKFPWKKVP. An NPA 1 motif is present at residues 408–410; sequence NPA. Residues 428–448 traverse the membrane as a helical segment; that stretch reads VYIVAQIIGAYFGGAMAYGYF. Over 449 to 481 the chain is Extracellular; it reads WSSITEFEGGPHIRTTATGACLFTDPKSYVTWR. Residues 482 to 502 form a helical membrane-spanning segment; the sequence is NAFFDEFIGASILVGCLMALL. Over 503 to 509 the chain is Cytoplasmic; that stretch reads DDSNAPP. Residues 510-530 form a helical membrane-spanning segment; that stretch reads GNGMTALIIGFLVAAIGMALG. At 531–569 the chain is on the extracellular side; it reads YQTSFTINPARDLGPRIFASMIGYGPHAFHLTHWWWTWG. The NPA 2 signature appears at 538 to 540; that stretch reads NPA. The chain crosses the membrane as a helical span at residues 570–590; that stretch reads AWGGPIAGGIAGALIYDIFIF. The Cytoplasmic segment spans residues 591–646; the sequence is TGCESPVNYPDNGYIENRVGKLLHAEFHQNDGTVSDESGVNSNSNTGSKKSVPTSS. The tract at residues 621–646 is disordered; sequence DGTVSDESGVNSNSNTGSKKSVPTSS.

This sequence belongs to the MIP/aquaporin (TC 1.A.8) family.

It is found in the cell membrane. The catalysed reaction is glycerol(in) = glycerol(out). Its function is as follows. Channel protein that mediates glycerol entry under ethanol stimulation. Does not seem to mediate glycerol uptake under standard conditions. In Saccharomyces cerevisiae (strain ATCC 204508 / S288c) (Baker's yeast), this protein is Aquaglycerol porin AQY3.